Reading from the N-terminus, the 211-residue chain is Large ribosomal subunit protein uL4 (211 aa).

The disordered stretch occupies residues 40–85 (QQAHSRQGTASTLTRSEVRGGGRKPYKQKGTGRARQGSVRTPLRPG). Residues 41–54 (QAHSRQGTASTLTR) are compositionally biased toward polar residues. The span at 60–71 (GGRKPYKQKGTG) shows a compositional bias: basic residues.

Belongs to the universal ribosomal protein uL4 family. As to quaternary structure, part of the 50S ribosomal subunit.

One of the primary rRNA binding proteins, this protein initially binds near the 5'-end of the 23S rRNA. It is important during the early stages of 50S assembly. It makes multiple contacts with different domains of the 23S rRNA in the assembled 50S subunit and ribosome. Its function is as follows. Forms part of the polypeptide exit tunnel. The chain is Large ribosomal subunit protein uL4 from Synechococcus sp. (strain CC9311).